A 644-amino-acid polypeptide reads, in one-letter code: Coiled-coil domain-containing protein 22 homolog (644 aa).

Positions 316-341 are disordered; it reads DEQKAAAMAGLSESGPPKMDTEEELQ. 3 coiled-coil regions span residues 333 to 383, 409 to 486, and 592 to 644; these read KMDT…NEQV, DAEN…GKDD, and GVIM…LKSS.

The protein belongs to the CCDC22 family.

The polypeptide is Coiled-coil domain-containing protein 22 homolog (Nematostella vectensis (Starlet sea anemone)).